The following is a 166-amino-acid chain: NAD(P)H-quinone oxidoreductase subunit I, chloroplastic (166 aa).

4Fe-4S ferredoxin-type domains follow at residues 55 to 84 and 95 to 124; these read GRIHFEFDKCIACEVCVRVCPIDLPVVDWK and LNYSIDFGICIFCGNCVEYCPTNCLSMTEE. 8 residues coordinate [4Fe-4S] cluster: C64, C67, C70, C74, C104, C107, C110, and C114.

The protein belongs to the complex I 23 kDa subunit family. In terms of assembly, NDH is composed of at least 16 different subunits, 5 of which are encoded in the nucleus. [4Fe-4S] cluster serves as cofactor.

The protein localises to the plastid. Its subcellular location is the chloroplast thylakoid membrane. The enzyme catalyses a plastoquinone + NADH + (n+1) H(+)(in) = a plastoquinol + NAD(+) + n H(+)(out). The catalysed reaction is a plastoquinone + NADPH + (n+1) H(+)(in) = a plastoquinol + NADP(+) + n H(+)(out). In terms of biological role, NDH shuttles electrons from NAD(P)H:plastoquinone, via FMN and iron-sulfur (Fe-S) centers, to quinones in the photosynthetic chain and possibly in a chloroplast respiratory chain. The immediate electron acceptor for the enzyme in this species is believed to be plastoquinone. Couples the redox reaction to proton translocation, and thus conserves the redox energy in a proton gradient. The protein is NAD(P)H-quinone oxidoreductase subunit I, chloroplastic of Acanthospermum australe (Paraguayan starburr).